The chain runs to 768 residues: MAKKQRYNTTQRKELRKKEVDYIKELETKIDEYDASINKPVFFKDLPISNSTLKGLNDSAFLKLTDIQRDSIPMSLKGYDILGAAKTGSGKTLAFLIPVLEKLYRERWTEFDGLGALIISPTRELAMQIYEVLLKIGTSTSFSAGLVIGGKDVKFEMERISKINILIGTPGRILQHMDQAIGLNTSNLQMLVLDEADRCLDMGFKKTLDAIVSNLPPTRQTLLFSATQSQSLEDLARLSLTDYKTIGNPDILNPSNGKVLGPSTPETLQQSYINVELPDKLDMLYSFIKSHLKSKMIVFLSSSKQVHFVYETFRKMQPGISLMHLHGRQKQKARTETLDKFNRAQHVCLFATDVVARGIDFPAIDWVVQVDCPEDVDTYIHRVGRCARYGKQGKSMIMLTPQEEEGFLKRLASRKIEPSKLTIKQSKKKSIKPQLQSLLFKDPELKYLGQKAFISYIRSVFIQKDKEVFKFEELPTDEFANSLGLPGAPKIKMKGTKSVEQIKQMKNASRQLLSLAKTNEDGELVEEKSKQPVRTKYDKMFERKNQTVLSEHYLNITKAQAQEDEDDDFISIKRTDHALNEEELPQLSLPSSRRAQKRALSKKASLSTKGNATRVVFDDDGAAHPVYELQGEEDFIKAGAAEDQKLEYLQKEKDVMNEVDVEDKQVAKQKKQEKKRKRLEAIRREMEADMDNESSGEEKVPFLGTGNLSDDMQDPDSDDEEGSRLRKRSRFETNNNYNDNDSDDGVIQVEEPQTLEDLESLTARLIDN.

Positions 41–69 (VFFKDLPISNSTLKGLNDSAFLKLTDIQR) match the Q motif motif. In terms of domain architecture, Helicase ATP-binding spans 72–246 (IPMSLKGYDI…RLSLTDYKTI (175 aa)). Residue 85 to 92 (AKTGSGKT) coordinates ATP. A DEAD box motif is present at residues 194–197 (DEAD). In terms of domain architecture, Helicase C-terminal spans 280 to 439 (KLDMLYSFIK…SIKPQLQSLL (160 aa)). Disordered stretches follow at residues 581–612 (EEEL…KGNA) and 653–754 (KDVM…EPQT). The segment covering 653 to 666 (KDVMNEVDVEDKQV) has biased composition (basic and acidic residues). Residues 667-678 (AKQKKQEKKRKR) are compositionally biased toward basic residues. Over residues 711–721 (DMQDPDSDDEE) the composition is skewed to acidic residues.

Belongs to the DEAD box helicase family. DDX10/DBP4 subfamily. In terms of assembly, interacts with the U3 and U14 snoRNAs. Associates with pre-ribosomal complexes.

The protein resides in the nucleus. It is found in the nucleolus. The catalysed reaction is ATP + H2O = ADP + phosphate + H(+). ATP-dependent RNA helicase required for ribosome biogenesis. Involved in the release of U14 snoRNA in pre-ribosomal complexes. Required for pre-rRNA cleavage at site A2. The sequence is that of ATP-dependent RNA helicase DBP4 (DBP4) from Vanderwaltozyma polyspora (strain ATCC 22028 / DSM 70294 / BCRC 21397 / CBS 2163 / NBRC 10782 / NRRL Y-8283 / UCD 57-17) (Kluyveromyces polysporus).